We begin with the raw amino-acid sequence, 287 residues long: Nucleotide-binding protein Ajs_0902 (287 aa).

Residue glycine 10–serine 17 coordinates ATP. A GTP-binding site is contributed by aspartate 59 to serine 62.

It belongs to the RapZ-like family.

Functionally, displays ATPase and GTPase activities. This chain is Nucleotide-binding protein Ajs_0902, found in Acidovorax sp. (strain JS42).